The sequence spans 443 residues: L-seryl-tRNA(Sec) selenium transferase (443 aa).

The residue at position 285 (Lys-285) is an N6-(pyridoxal phosphate)lysine.

It belongs to the SelA family. Requires pyridoxal 5'-phosphate as cofactor.

The protein localises to the cytoplasm. It carries out the reaction L-seryl-tRNA(Sec) + selenophosphate + H(+) = L-selenocysteinyl-tRNA(Sec) + phosphate. The protein operates within aminoacyl-tRNA biosynthesis; selenocysteinyl-tRNA(Sec) biosynthesis; selenocysteinyl-tRNA(Sec) from L-seryl-tRNA(Sec) (bacterial route): step 1/1. Its function is as follows. Converts seryl-tRNA(Sec) to selenocysteinyl-tRNA(Sec) required for selenoprotein biosynthesis. The sequence is that of L-seryl-tRNA(Sec) selenium transferase from Campylobacter lari (strain RM2100 / D67 / ATCC BAA-1060).